We begin with the raw amino-acid sequence, 156 residues long: Ribosome maturation factor RimP (156 aa).

Belongs to the RimP family.

It is found in the cytoplasm. Functionally, required for maturation of 30S ribosomal subunits. In Oenococcus oeni (strain ATCC BAA-331 / PSU-1), this protein is Ribosome maturation factor RimP.